A 262-amino-acid polypeptide reads, in one-letter code: Polyamine aminopropyltransferase (262 aa).

Residues 1-249 (MWITQEITPY…DIHRAAFALP (249 aa)) form the PABS domain. Asparagine 29 is a binding site for S-methyl-5'-thioadenosine. A spermidine-binding site is contributed by aspartate 83. Aspartate 155 acts as the Proton acceptor in catalysis.

It belongs to the spermidine/spermine synthase family. In terms of assembly, homodimer or homotetramer.

Its subcellular location is the cytoplasm. It carries out the reaction S-adenosyl 3-(methylsulfanyl)propylamine + putrescine = S-methyl-5'-thioadenosine + spermidine + H(+). It functions in the pathway amine and polyamine biosynthesis; spermidine biosynthesis; spermidine from putrescine: step 1/1. In terms of biological role, catalyzes the irreversible transfer of a propylamine group from the amino donor S-adenosylmethioninamine (decarboxy-AdoMet) to putrescine (1,4-diaminobutane) to yield spermidine. The polypeptide is Polyamine aminopropyltransferase (Helicobacter pylori (strain G27)).